Here is a 304-residue protein sequence, read N- to C-terminus: N-acetyl-D-glucosamine kinase (304 aa).

ATP contacts are provided by residues 4–11 (GFDIGGTK) and 133–140 (GFGGGLIF). Zn(2+) is bound by residues H157, C178, C180, and C185.

Belongs to the ROK (NagC/XylR) family. NagK subfamily.

It catalyses the reaction N-acetyl-D-glucosamine + ATP = N-acetyl-D-glucosamine 6-phosphate + ADP + H(+). It participates in cell wall biogenesis; peptidoglycan recycling. In terms of biological role, catalyzes the phosphorylation of N-acetyl-D-glucosamine (GlcNAc) derived from cell-wall degradation, yielding GlcNAc-6-P. The sequence is that of N-acetyl-D-glucosamine kinase from Pasteurella multocida (strain Pm70).